We begin with the raw amino-acid sequence, 474 residues long: MLTLKEKEFWFVVGSQQLYGEEALQEVKAQAQTVTDALNESGALPYPIVLKDLAINADQITNVMKEVNYRDEVAGVITWMHTFSPAKMWIRGTKLLQKPLLHLATQFNESIPWDTIDMDFMNLNQSAHGDREYGFINARLNKQNKVVVGYWGKSEVQRQIAEWMDVAAAYNESFNVKVARFGDNMRNVAVTDGDKIEAQIQFGWTVDYFAIGDLVQYVNAVKEEEIDVLFAEYKDSYDFDYGDYSKDDWEASVRVQASYEIAIKRFLDDGGYNAFTSNFEDLYGMKQLPGLAVQRLMGQGYGFAGEGDWKTAALDRLLKVMSHNQSTGFMEDYTYELAEGKEAILQSHMLEVDPTLASTKPKITVFPLGIGDREDPARLVFDGKAGDGVVVSMADFGTHFKLLINEVNAFEPTTPAPNLPVARVLWEVKPNFQDGVKAWIENGGGHHTVVSLNLTTDQVVSYAKLVGLDYIVIK.

Positions 306, 331, 348, and 447 each coordinate Mn(2+).

This sequence belongs to the arabinose isomerase family. Mn(2+) is required as a cofactor.

The enzyme catalyses beta-L-arabinopyranose = L-ribulose. The protein operates within carbohydrate degradation; L-arabinose degradation via L-ribulose; D-xylulose 5-phosphate from L-arabinose (bacterial route): step 1/3. Catalyzes the conversion of L-arabinose to L-ribulose. The protein is L-arabinose isomerase of Oceanobacillus iheyensis (strain DSM 14371 / CIP 107618 / JCM 11309 / KCTC 3954 / HTE831).